A 127-amino-acid polypeptide reads, in one-letter code: Aspartate 1-decarboxylase (127 aa).

The active-site Schiff-base intermediate with substrate; via pyruvic acid is Ser-25. Ser-25 is subject to Pyruvic acid (Ser). Thr-57 serves as a coordination point for substrate. The Proton donor role is filled by Tyr-58. 73–75 (GAA) is a substrate binding site.

The protein belongs to the PanD family. As to quaternary structure, heterooctamer of four alpha and four beta subunits. Pyruvate is required as a cofactor. Is synthesized initially as an inactive proenzyme, which is activated by self-cleavage at a specific serine bond to produce a beta-subunit with a hydroxyl group at its C-terminus and an alpha-subunit with a pyruvoyl group at its N-terminus.

The protein localises to the cytoplasm. It carries out the reaction L-aspartate + H(+) = beta-alanine + CO2. Its pathway is cofactor biosynthesis; (R)-pantothenate biosynthesis; beta-alanine from L-aspartate: step 1/1. Catalyzes the pyruvoyl-dependent decarboxylation of aspartate to produce beta-alanine. The protein is Aspartate 1-decarboxylase of Geobacillus sp. (strain WCH70).